The sequence spans 231 residues: Quercetin 2,3-dioxygenase (231 aa).

His57, His59, His101, and Glu103 together coordinate a divalent metal cation.

The protein belongs to the pirin family. Zn(2+) is required as a cofactor. The cofactor is Co(2+). Requires Fe(2+) as cofactor.

The catalysed reaction is quercetin + O2 = 2-(3,4-dihydroxybenzoyloxy)-4,6-dihydroxybenzoate + CO. It functions in the pathway flavonoid metabolism; quercetin degradation. Functionally, has quercetin 2,3-dioxygenase activity in vitro. Its physiological role is unknown; however, may provide a mechanism that would avoid inhibition of key cellular proteins, such as DNA gyrase, by quercetin. This chain is Quercetin 2,3-dioxygenase (yhhW), found in Escherichia coli O157:H7.